The sequence spans 730 residues: Elongation factor 2 (730 aa).

The tr-type G domain occupies 19–229; it reads LMIRNIGIVA…GVSFSEVFNY (211 aa). Residues 28-35, 94-98, and 148-151 contribute to the GTP site; these read AHIDHGKT, DTPGH, and NKVD. At H596 the chain carries Diphthamide.

This sequence belongs to the TRAFAC class translation factor GTPase superfamily. Classic translation factor GTPase family. EF-G/EF-2 subfamily.

It is found in the cytoplasm. In terms of biological role, catalyzes the GTP-dependent ribosomal translocation step during translation elongation. During this step, the ribosome changes from the pre-translocational (PRE) to the post-translocational (POST) state as the newly formed A-site-bound peptidyl-tRNA and P-site-bound deacylated tRNA move to the P and E sites, respectively. Catalyzes the coordinated movement of the two tRNA molecules, the mRNA and conformational changes in the ribosome. The chain is Elongation factor 2 (fusA) from Methanococcoides burtonii (strain DSM 6242 / NBRC 107633 / OCM 468 / ACE-M).